Reading from the N-terminus, the 562-residue chain is Phosphoacetylglucosamine mutase (562 aa).

The active-site Phosphoserine intermediate is the S74. Positions 74, 291, 293, and 295 each coordinate Mg(2+). Substrate contacts are provided by residues 395-397 (EAN), 526-530 (RPSGT), and R535.

This sequence belongs to the phosphohexose mutase family. It depends on Mg(2+) as a cofactor.

It catalyses the reaction N-acetyl-alpha-D-glucosamine 1-phosphate = N-acetyl-D-glucosamine 6-phosphate. It functions in the pathway nucleotide-sugar biosynthesis; UDP-N-acetyl-alpha-D-glucosamine biosynthesis; N-acetyl-alpha-D-glucosamine 1-phosphate from alpha-D-glucosamine 6-phosphate (route I): step 2/2. In terms of biological role, interconverts GlcNAc-6-P and GlcNAc-1-P. This Oryza sativa subsp. japonica (Rice) protein is Phosphoacetylglucosamine mutase.